We begin with the raw amino-acid sequence, 559 residues long: Leucine-rich repeat protein soc-2 (559 aa).

Residues 1–17 (METSKEFEFRPAKETSR) are compositionally biased toward basic and acidic residues. Residues 1–55 (METSKEFEFRPAKETSRSKSPGGIVGRLSNFARNKARHSLSEKGSNSVGGSGGAG) form a disordered region. LRR repeat units follow at residues 74 to 95 (QDQR…IKEL), 97 to 118 (QLTE…IGQL), 120 to 142 (NLKK…ASLE), 143 to 164 (SLET…IYKI), 166 to 187 (SLET…IGNL), 189 to 210 (KLKM…IGKL), 212 to 233 (SLVV…IGDC), 235 to 256 (SLTQ…IGKL), 258 to 279 (NLVR…LESC), 281 to 302 (QLEE…LLTM), 305 to 326 (KIHT…GPQQ), 329 to 350 (STVT…IFSK), 353 to 374 (RLTK…MGSW), 376 to 397 (SITE…IEKL), 399 to 420 (NLEI…IGNL), 422 to 443 (KLRE…IGFL), 445 to 466 (HLTK…IGNL), 468 to 489 (SLQD…IGHL), 491 to 513 (SLKS…LALC), and 515 to 536 (SLEI…ITAG).

The protein belongs to the SHOC2 family. In terms of assembly, interacts with let-60.

In terms of biological role, acts as a Ras effector and participates in MAPK pathway activation. Probably acts as a scaffolding protein in a protein phosphatase complex that specifically dephosphorylates Raf kinase and stimulates Raf activity at specialized signaling complexes upon Ras activation. Required for vulval development. Involved in fluid homeostasis. Plays a role in nicotinic acetylcholine receptor (nAChR)-mediated sensitivity to nicotine. The protein is Leucine-rich repeat protein soc-2 (soc-2) of Caenorhabditis elegans.